Consider the following 366-residue polypeptide: 5-formaminoimidazole-4-carboxamide-1-(beta)-D-ribofuranosyl 5'-monophosphate synthetase (366 aa).

5-amino-1-(5-phospho-beta-D-ribosyl)imidazole-4-carboxamide contacts are provided by H27 and S96. The ATP-grasp domain maps to R131–K357. ATP contacts are provided by residues P154–Y208 and E239. N263 is a 5-amino-1-(5-phospho-beta-D-ribosyl)imidazole-4-carboxamide binding site. The Mg(2+) site is built by E302 and E315.

Belongs to the phosphohexose mutase family. Mg(2+) serves as cofactor. Mn(2+) is required as a cofactor.

The catalysed reaction is 5-amino-1-(5-phospho-beta-D-ribosyl)imidazole-4-carboxamide + formate + ATP = 5-formamido-1-(5-phospho-D-ribosyl)imidazole-4-carboxamide + ADP + phosphate. Its pathway is purine metabolism; IMP biosynthesis via de novo pathway; 5-formamido-1-(5-phospho-D-ribosyl)imidazole-4-carboxamide from 5-amino-1-(5-phospho-D-ribosyl)imidazole-4-carboxamide (formate route): step 1/1. Functionally, catalyzes the ATP- and formate-dependent formylation of 5-aminoimidazole-4-carboxamide-1-beta-d-ribofuranosyl 5'-monophosphate (AICAR) to 5-formaminoimidazole-4-carboxamide-1-beta-d-ribofuranosyl 5'-monophosphate (FAICAR) in the absence of folates. The polypeptide is 5-formaminoimidazole-4-carboxamide-1-(beta)-D-ribofuranosyl 5'-monophosphate synthetase (Korarchaeum cryptofilum (strain OPF8)).